The sequence spans 733 residues: Two pore calcium channel protein 1 (733 aa).

At Met1 the chain carries N-acetylmethionine. The Cytoplasmic portion of the chain corresponds to 1–71 (MEDPLIGRDS…RYYFIFTRLD (71 aa)). The helical transmembrane segment at 72–92 (LIWSLNYFALLFLNFFEQPLW) threads the bilayer. The Vacuolar portion of the chain corresponds to 93 to 120 (CEKNPKPSCKDRDYYYLGELPYLTNAES). The helical transmembrane segment at 121–141 (IIYEVITLAILLVHTFFPISY) threads the bilayer. At 142 to 158 (EGSRIFWTSRLNLVKVA) the chain is on the cytoplasmic side. Residues 159-179 (CVVILFVDVLVDFLYLSPLAF) traverse the membrane as a helical segment. Residue Asp180 is a topological domain, vacuolar. The chain crosses the membrane as a helical; Voltage-sensor span at residues 181–199 (FLPFRIAPYVRVIIFILSI). Over 200–218 (RELRDTLVLLSGMLGTYLN) the chain is Cytoplasmic. The chain crosses the membrane as a helical span at residues 219-239 (ILALWMLFLLFASWIAFVMFE). Residues 240–245 (DTQQGL) lie on the Vacuolar side of the membrane. An intramembrane region (pore-forming) is located at residues 246–260 (TVFTSYGATLYQMFI). At 261–282 (LFTTSNNPDVWIPAYKSSRWSS) the chain is on the vacuolar side. The chain crosses the membrane as a helical span at residues 283–303 (VFFVLYVLIGVYFVTNLILAV). The Cytoplasmic segment spans residues 304–428 (VYDSFKEQLA…LSQQLRAFVR (125 aa)). EF-hand domains follow at residues 322-357 (MKRRMLEKAFGLIDSDKNGEIDKNQCIKLFEQLTNY) and 363-398 (ISKEEFGLIFDELDDTRDFKINKDEFADLCQAIALR). A helical membrane pass occupies residues 429-449 (SPNFGYAISFILIINFIAVVV). Residues 450–465 (ETTLDIEESSAQKPWQ) are Vacuolar-facing. The chain crosses the membrane as a helical span at residues 466–486 (VAEFVFGWIYVLEMALKIYTY). The Cytoplasmic segment spans residues 487 to 498 (GFENYWREGANR). Residues 499–519 (FDFLVTWVIVIGETATFITPD) form a helical membrane-spanning segment. The Vacuolar portion of the chain corresponds to 520-528 (ENTFFSNGE). Residues 529 to 546 (WIRYLLLARMLRLIRLLM) traverse the membrane as a helical; Voltage-sensor segment. Topologically, residues 547–557 (NVQRYRAFIAT) are cytoplasmic. Residues 558–578 (FITLIPSLMPYLGTIFCVLCI) traverse the membrane as a helical segment. Topologically, residues 579 to 615 (YCSIGVQVFGGLVNAGNKKLFETELAEDDYLLFNFND) are vacuolar. An intramembrane region (pore-forming) is located at residues 616–630 (YPNGMVTLFNLLVMG). Topologically, residues 631–651 (NWQVWMESYKDLTGTWWSITY) are vacuolar. A helical transmembrane segment spans residues 652–672 (FVSFYVITILLLLNLVVAFVL). The Cytoplasmic segment spans residues 673–733 (EAFFTELDLE…SKPECSTSDT (61 aa)). Positions 686 to 695 (KCQGQDSQEK) are enriched in basic and acidic residues. The interval 686–711 (KCQGQDSQEKRNRRRSAGSKSRSQRV) is disordered.

The protein belongs to the calcium channel alpha-1 subunit (TC 1.A.1.11) family. Two pore calcium channel subfamily. In terms of assembly, homodimer. Ubiquitously expressed.

It is found in the vacuole membrane. Inhibited by Al(3+). Functions as a voltage-gated inward-rectifying Ca(2+) channel (VDCC) across the vacuole membrane. Is one of the essential components of the slow vacuolar (SV) channel. Acts as the major ROS-responsive Ca(2+) channel and is the possible target of Al-dependent inhibition. Involved in the regulation of germination and stomatal movement. This Arabidopsis thaliana (Mouse-ear cress) protein is Two pore calcium channel protein 1 (TPC1).